The chain runs to 1402 residues: DNA-directed RNA polymerase subunit beta' (1402 aa).

Residues Cys73, Cys75, Cys88, and Cys91 each contribute to the Zn(2+) site. The Mg(2+) site is built by Asp464, Asp466, and Asp468. Positions 812, 886, 893, and 896 each coordinate Zn(2+).

This sequence belongs to the RNA polymerase beta' chain family. As to quaternary structure, the RNAP catalytic core consists of 2 alpha, 1 beta, 1 beta' and 1 omega subunit. When a sigma factor is associated with the core the holoenzyme is formed, which can initiate transcription. Requires Mg(2+) as cofactor. Zn(2+) is required as a cofactor.

It catalyses the reaction RNA(n) + a ribonucleoside 5'-triphosphate = RNA(n+1) + diphosphate. Functionally, DNA-dependent RNA polymerase catalyzes the transcription of DNA into RNA using the four ribonucleoside triphosphates as substrates. The polypeptide is DNA-directed RNA polymerase subunit beta' (Rhodopseudomonas palustris (strain ATCC BAA-98 / CGA009)).